A 316-amino-acid polypeptide reads, in one-letter code: MTAQQLDASGRLRHLLTLEGLPRETLLQLLDRAGQIRDAAVGRVGNKRQVLAGSAVCTLFFEPSTRTRSSFQLAAQRLGADVLNFDASTSSTRKGETACDTLRNLEAMGVRGFVVRHPDDGAVAALAEAAGEGTALINAGDGRSAHPTQGLLDMLTLRQAKGPDFSKMKVVIVGDVKHSRVARTDLHALRTLGVGEIRVCGPQSLLPDDETLKGCVVGDDFDAMLEGVDALMMLRLQRERMEEGLVPSLEQYHAQYGLTNERLARAGKDAAVLHPGPINRGVEVTDEVADGPQSWVLRQVANGVAVRMAVLETLLG.

Residues arginine 66 and threonine 67 each coordinate carbamoyl phosphate. Residue lysine 94 coordinates L-aspartate. Arginine 116, histidine 146, and glutamine 149 together coordinate carbamoyl phosphate. Residues arginine 180 and arginine 235 each contribute to the L-aspartate site. Carbamoyl phosphate is bound by residues glycine 276 and proline 277.

The protein belongs to the aspartate/ornithine carbamoyltransferase superfamily. ATCase family. As to quaternary structure, heterododecamer (2C3:3R2) of six catalytic PyrB chains organized as two trimers (C3), and six regulatory PyrI chains organized as three dimers (R2).

It catalyses the reaction carbamoyl phosphate + L-aspartate = N-carbamoyl-L-aspartate + phosphate + H(+). It functions in the pathway pyrimidine metabolism; UMP biosynthesis via de novo pathway; (S)-dihydroorotate from bicarbonate: step 2/3. Its function is as follows. Catalyzes the condensation of carbamoyl phosphate and aspartate to form carbamoyl aspartate and inorganic phosphate, the committed step in the de novo pyrimidine nucleotide biosynthesis pathway. This is Aspartate carbamoyltransferase catalytic subunit from Stenotrophomonas maltophilia (strain R551-3).